Consider the following 415-residue polypeptide: MKHLPEQDAQVFKAIQLERKRQQDKIELIASENFVSEAVMEAQGSVLTNKYAEGYPGKRYYGGCEHVDVVEDIARDRAKEIFGAEYVNVQPHSGAQANMAVYFTILEHGDTVLGMNLSHGGHLTHGSPVNFSGVQYNFVEYGVDKETQHIDYQDVLEKAREHKPKLIVAGASAYPRQIDFKKFREIADEVGAYFMVDMAHIAGLVAVGLHPNPVPYADFVTTTTHKTLRGPRGGMILCREEFGKKIDKSIFPGIQGGPLMHVISAKAVSFGEVLNGDFKTYAQNVIDNAKQLAETLLSEDIQLVSGGTDNHLVLIDLRSLGITGKIAENVLDEIGITVNKNAIPYDPEKPFVTSGVRVGTAAVTSRGFDQEAMKEVGSIIALALKHHEDEAKLEEAKKRVSDLTARFPLYNELDY.

(6S)-5,6,7,8-tetrahydrofolate is bound by residues L117 and 121–123 (GHL). K226 is subject to N6-(pyridoxal phosphate)lysine. A (6S)-5,6,7,8-tetrahydrofolate-binding site is contributed by E241.

This sequence belongs to the SHMT family. In terms of assembly, homodimer. Pyridoxal 5'-phosphate is required as a cofactor.

Its subcellular location is the cytoplasm. The catalysed reaction is (6R)-5,10-methylene-5,6,7,8-tetrahydrofolate + glycine + H2O = (6S)-5,6,7,8-tetrahydrofolate + L-serine. It participates in one-carbon metabolism; tetrahydrofolate interconversion. The protein operates within amino-acid biosynthesis; glycine biosynthesis; glycine from L-serine: step 1/1. In terms of biological role, catalyzes the reversible interconversion of serine and glycine with tetrahydrofolate (THF) serving as the one-carbon carrier. This reaction serves as the major source of one-carbon groups required for the biosynthesis of purines, thymidylate, methionine, and other important biomolecules. Also exhibits THF-independent aldolase activity toward beta-hydroxyamino acids, producing glycine and aldehydes, via a retro-aldol mechanism. In Bacillus pumilus (strain SAFR-032), this protein is Serine hydroxymethyltransferase.